We begin with the raw amino-acid sequence, 321 residues long: PIH1 domain-containing protein 2 (321 aa).

It belongs to the PIH1 family.

This chain is PIH1 domain-containing protein 2 (pih1d2), found in Xenopus tropicalis (Western clawed frog).